The sequence spans 401 residues: Multidrug resistance protein MdtA (401 aa).

The N-terminal stretch at 1–20 (MNQNNKHRTLLFRAALAAIA) is a signal peptide.

It belongs to the membrane fusion protein (MFP) (TC 8.A.1) family. As to quaternary structure, part of a tripartite efflux system composed of MdtA, MdtB and MdtC.

It localises to the cell inner membrane. In Photorhabdus laumondii subsp. laumondii (strain DSM 15139 / CIP 105565 / TT01) (Photorhabdus luminescens subsp. laumondii), this protein is Multidrug resistance protein MdtA.